The chain runs to 462 residues: Hyaluronidase-1 (462 aa).

Residues 1–52 (MLGLTQHAQKVWRMKPFSPEVSPGSSPATAGHLLRISTLFLTLLELAQVCRG) form the signal peptide. 2 cysteine pairs are disulfide-bonded: cysteine 71–cysteine 361 and cysteine 235–cysteine 249. N-linked (GlcNAc...) asparagine glycans are attached at residues asparagine 98 and asparagine 127. Glutamate 159 serves as the catalytic Proton donor. 3 N-linked (GlcNAc...) asparagine glycosylation sites follow: asparagine 244, asparagine 265, and asparagine 378. 3 disulfides stabilise this stretch: cysteine 386/cysteine 397, cysteine 391/cysteine 446, and cysteine 448/cysteine 457. In terms of domain architecture, EGF-like spans 446 to 457 (CRCYRGWRGKWC).

It belongs to the glycosyl hydrolase 56 family. As to expression, highly expressed in liver, kidney, lung and skin.

Its subcellular location is the secreted. It localises to the lysosome. The catalysed reaction is Random hydrolysis of (1-&gt;4)-linkages between N-acetyl-beta-D-glucosamine and D-glucuronate residues in hyaluronate.. Its function is as follows. May have a role in promoting tumor progression. May block the TGFB1-enhanced cell growth. This is Hyaluronidase-1 (Hyal1) from Mus musculus (Mouse).